The sequence spans 409 residues: MAMRWSCWRRGCSWRPTAVGSPRRERPGCVEPLGTRAASDTRAQIPYFSLMKILMSASPTMHSISQFHQRTPAMCSCRQTQSGEKYSDPFKLGWRDLKGLYEDIRKELHISTRELKDMSEYYFDGKGKAFRPIIVVLMARACNIHHNNAREMQASQRSIALVAEMIHTATLVHDDVIDDASSRRGKHTVNKIWGEKKAVLAGDLILSAASVALARIGNTAVVSMLAQVIEDLVRGEFLQLGSKENENERFAHYLEKTFKKTASLIANSCKAVSVLGCPDPVVHEIAYQYGKNVGIAFQLIDDVLDFTSCSDQMGKPTSADLKLGIATGPVLFACQQFPEMNAMIMRRFSLPGDVDRARQYVLQSDGVQQTTYLAQQYCHKAVREIRKLRPSTERDALIQLSESVLTRDK.

Residues Lys128, Arg131, and His167 each contribute to the isopentenyl diphosphate site. The Mg(2+) site is built by Asp174 and Asp178. An isopentenyl diphosphate-binding site is contributed by Arg184.

The protein belongs to the FPP/GGPP synthase family. In terms of assembly, heterotetramer composed of 2 PDSS1/DPS1 and 2 PDSS2/DLP1 subunits. The cofactor is Mg(2+).

It is found in the mitochondrion. It catalyses the reaction 7 isopentenyl diphosphate + (2E,6E)-farnesyl diphosphate = all-trans-decaprenyl diphosphate + 7 diphosphate. The enzyme catalyses 6 isopentenyl diphosphate + (2E,6E)-farnesyl diphosphate = all-trans-nonaprenyl diphosphate + 6 diphosphate. Its pathway is cofactor biosynthesis; ubiquinone biosynthesis. In terms of biological role, heterotetrameric enzyme that catalyzes the condensation of farnesyl diphosphate (FPP), which acts as a primer, and isopentenyl diphosphate (IPP) to produce prenyl diphosphates of varying chain lengths and participates in the determination of the side chain of ubiquinone. Supplies nona and decaprenyl diphosphate, the precursors for the side chain of the isoprenoid quinones ubiquinone-9 (Q9)and ubiquinone-10 (Q10) respectively. The enzyme adds isopentenyl diphosphate molecules sequentially to farnesyl diphosphate with trans stereochemistry. This Mus musculus (Mouse) protein is All trans-polyprenyl-diphosphate synthase PDSS1.